A 49-amino-acid polypeptide reads, in one-letter code: Protein 19.5 (49 aa).

The signal sequence occupies residues 1-23 (MFRLLLNLLRHRVTYRFLVVLCA).

In Escherichia phage T7 (Bacteriophage T7), this protein is Protein 19.5.